A 110-amino-acid chain; its full sequence is Thioredoxin (110 aa).

In terms of domain architecture, Thioredoxin spans 2 to 110 (SALLVEIDKD…IDAMIAKHVG (109 aa)). A disulfide bridge links cysteine 33 with cysteine 36.

Belongs to the thioredoxin family.

Its function is as follows. Participates in various redox reactions through the reversible oxidation of its active center dithiol to a disulfide and catalyzes dithiol-disulfide exchange reactions. In Peptoclostridium acidaminophilum (Eubacterium acidaminophilum), this protein is Thioredoxin (trxA).